We begin with the raw amino-acid sequence, 430 residues long: Isochorismate synthase MenF (430 aa).

K187 functions as the Proton acceptor in the catalytic mechanism. E237 acts as the Proton donor in catalysis. Positions 281 and 414 each coordinate Mg(2+).

It belongs to the isochorismate synthase family. Mg(2+) serves as cofactor.

The enzyme catalyses chorismate = isochorismate. Its pathway is quinol/quinone metabolism; 1,4-dihydroxy-2-naphthoate biosynthesis; 1,4-dihydroxy-2-naphthoate from chorismate: step 1/7. It participates in quinol/quinone metabolism; menaquinone biosynthesis. Its function is as follows. Catalyzes the conversion of chorismate to isochorismate. This is Isochorismate synthase MenF from Haemophilus influenzae (strain ATCC 51907 / DSM 11121 / KW20 / Rd).